A 337-amino-acid polypeptide reads, in one-letter code: MKRIAVLTSGGDAPGMNAAIRAVVRKAISEGMEVYGVNHGYAGLVAGDIFPISSKGVGDKISRGGTFLYSARYPEFANLEGQLAGIEQLKKHGIEGVVVIGGDGSYHGAMRLTEHGFPAVGIPGTIDNDIAGTDYTIGFDTAVNTAVEAIDKLRDTSSSHGRTFVVEVMGRNAGDIALWAGIASGADQIIVPEEEFNIQQVVKTIDDDFKKQGKNHHIIVLAEGVMSGDQFAQELKAAGNTSDLRVTNLGHILRGGSPTARDRVIASWMGSHAVELLKQGKGGFAVGIHNEELVESPILGSAEEGALFSLGEDGKIIVNNPHRARLDFAKLNRSLSR.

G11 is an ATP binding site. 21 to 25 is an ADP binding site; it reads RAVVR. ATP contacts are provided by residues 72 to 73 and 102 to 105; these read RY and GDGS. D103 is a binding site for Mg(2+). Substrate is bound at residue 125–127; the sequence is TID. D127 serves as the catalytic Proton acceptor. R154 is a binding site for ADP. Substrate-binding positions include R162 and 169–171; that span reads MGR. ADP contacts are provided by residues 185 to 187 and 214 to 216; these read GAD and KNH. Substrate is bound by residues E223, R245, and 251 to 254; that span reads HILR.

This sequence belongs to the phosphofructokinase type A (PFKA) family. ATP-dependent PFK group I subfamily. Prokaryotic clade 'B1' sub-subfamily. Homotetramer. The cofactor is Mg(2+).

The protein resides in the cytoplasm. It catalyses the reaction beta-D-fructose 6-phosphate + ATP = beta-D-fructose 1,6-bisphosphate + ADP + H(+). It participates in carbohydrate degradation; glycolysis; D-glyceraldehyde 3-phosphate and glycerone phosphate from D-glucose: step 3/4. Its activity is regulated as follows. Allosterically activated by ADP and other diphosphonucleosides, and allosterically inhibited by phosphoenolpyruvate. In terms of biological role, catalyzes the phosphorylation of D-fructose 6-phosphate to fructose 1,6-bisphosphate by ATP, the first committing step of glycolysis. This chain is ATP-dependent 6-phosphofructokinase, found in Streptococcus uberis (strain ATCC BAA-854 / 0140J).